We begin with the raw amino-acid sequence, 526 residues long: Peptide chain release factor 3 (526 aa).

The 270-residue stretch at 8 to 277 folds into the tr-type G domain; the sequence is GKRRTFAIIS…GLTDWAPAPQ (270 aa). Residues 17–24, 85–89, and 139–142 contribute to the GTP site; these read SHPDAGKT, DTPGH, and NKLD.

It belongs to the TRAFAC class translation factor GTPase superfamily. Classic translation factor GTPase family. PrfC subfamily.

It localises to the cytoplasm. Increases the formation of ribosomal termination complexes and stimulates activities of RF-1 and RF-2. It binds guanine nucleotides and has strong preference for UGA stop codons. It may interact directly with the ribosome. The stimulation of RF-1 and RF-2 is significantly reduced by GTP and GDP, but not by GMP. This Aliivibrio fischeri (strain ATCC 700601 / ES114) (Vibrio fischeri) protein is Peptide chain release factor 3.